The sequence spans 433 residues: Chaperone SurA (433 aa).

Positions Met1–Ala24 are cleaved as a signal peptide. PpiC domains follow at residues Asn173–Asp274 and Ile285–Asn385.

It is found in the periplasm. The enzyme catalyses [protein]-peptidylproline (omega=180) = [protein]-peptidylproline (omega=0). Functionally, chaperone involved in the correct folding and assembly of outer membrane proteins. Recognizes specific patterns of aromatic residues and the orientation of their side chains, which are found more frequently in integral outer membrane proteins. May act in both early periplasmic and late outer membrane-associated steps of protein maturation. This is Chaperone SurA from Baumannia cicadellinicola subsp. Homalodisca coagulata.